A 247-amino-acid chain; its full sequence is Cell division protein ZapD (247 aa).

It belongs to the ZapD family. As to quaternary structure, interacts with FtsZ.

Its subcellular location is the cytoplasm. Its function is as follows. Cell division factor that enhances FtsZ-ring assembly. Directly interacts with FtsZ and promotes bundling of FtsZ protofilaments, with a reduction in FtsZ GTPase activity. The sequence is that of Cell division protein ZapD from Klebsiella pneumoniae subsp. pneumoniae (strain ATCC 700721 / MGH 78578).